Here is a 291-residue protein sequence, read N- to C-terminus: Putative transport permease ycf38 (291 aa).

6 consecutive transmembrane segments (helical) span residues 47–67, 87–107, 135–155, 165–185, 195–215, and 262–282; these read ATLM…GGLF, SGII…PLMF, FMTC…LFMG, LIFA…SLAL, LLAL…ALAP, and ISLG…AYIV. The region spanning 47–289 is the ABC transmembrane type-2 domain; sequence ATLMAGIIQP…YIVSNILKAR (243 aa).

Belongs to the ABC-2 integral membrane protein family.

It localises to the plastid. The protein resides in the chloroplast membrane. This is Putative transport permease ycf38 (ycf38) from Porphyra purpurea (Red seaweed).